The following is a 226-amino-acid chain: UPF0173 metal-dependent hydrolase CTN_1413 (226 aa).

It belongs to the UPF0173 family.

The polypeptide is UPF0173 metal-dependent hydrolase CTN_1413 (Thermotoga neapolitana (strain ATCC 49049 / DSM 4359 / NBRC 107923 / NS-E)).